Reading from the N-terminus, the 261-residue chain is Ubiquinone biosynthesis O-methyltransferase (261 aa).

Positions 1–22 (MTMQVDPSANSSAASSAAPGTT) are disordered. The span at 8–18 (SANSSAASSAA) shows a compositional bias: low complexity. S-adenosyl-L-methionine contacts are provided by Arg55, Gly86, Asp107, and Met149.

This sequence belongs to the methyltransferase superfamily. UbiG/COQ3 family.

It carries out the reaction a 3-demethylubiquinol + S-adenosyl-L-methionine = a ubiquinol + S-adenosyl-L-homocysteine + H(+). The catalysed reaction is a 3-(all-trans-polyprenyl)benzene-1,2-diol + S-adenosyl-L-methionine = a 2-methoxy-6-(all-trans-polyprenyl)phenol + S-adenosyl-L-homocysteine + H(+). It participates in cofactor biosynthesis; ubiquinone biosynthesis. Its function is as follows. O-methyltransferase that catalyzes the 2 O-methylation steps in the ubiquinone biosynthetic pathway. This Nitrobacter winogradskyi (strain ATCC 25391 / DSM 10237 / CIP 104748 / NCIMB 11846 / Nb-255) protein is Ubiquinone biosynthesis O-methyltransferase.